The following is a 181-amino-acid chain: Adenine phosphoribosyltransferase (181 aa).

Belongs to the purine/pyrimidine phosphoribosyltransferase family. In terms of assembly, homodimer.

The protein resides in the cytoplasm. It carries out the reaction AMP + diphosphate = 5-phospho-alpha-D-ribose 1-diphosphate + adenine. It functions in the pathway purine metabolism; AMP biosynthesis via salvage pathway; AMP from adenine: step 1/1. Functionally, catalyzes a salvage reaction resulting in the formation of AMP, that is energically less costly than de novo synthesis. In Rhizobium leguminosarum bv. trifolii (strain WSM2304), this protein is Adenine phosphoribosyltransferase.